A 421-amino-acid polypeptide reads, in one-letter code: Gamma-glutamyl phosphate reductase (421 aa).

It belongs to the gamma-glutamyl phosphate reductase family.

It is found in the cytoplasm. The catalysed reaction is L-glutamate 5-semialdehyde + phosphate + NADP(+) = L-glutamyl 5-phosphate + NADPH + H(+). It participates in amino-acid biosynthesis; L-proline biosynthesis; L-glutamate 5-semialdehyde from L-glutamate: step 2/2. Catalyzes the NADPH-dependent reduction of L-glutamate 5-phosphate into L-glutamate 5-semialdehyde and phosphate. The product spontaneously undergoes cyclization to form 1-pyrroline-5-carboxylate. The sequence is that of Gamma-glutamyl phosphate reductase from Shewanella pealeana (strain ATCC 700345 / ANG-SQ1).